The primary structure comprises 696 residues: Polyribonucleotide nucleotidyltransferase (696 aa).

Aspartate 486 and aspartate 492 together coordinate Mg(2+). Residues 553–612 (PRIIVRNIPKDRIGELIGPGGKNVRGISELTGAELYIEDDGRVTISGSNQESAEKAAKMV) form the KH domain. The 69-residue stretch at 622-690 (GKIYEGKVKR…KTGKIDLSRK (69 aa)) folds into the S1 motif domain.

This sequence belongs to the polyribonucleotide nucleotidyltransferase family. Requires Mg(2+) as cofactor.

It localises to the cytoplasm. The catalysed reaction is RNA(n+1) + phosphate = RNA(n) + a ribonucleoside 5'-diphosphate. Involved in mRNA degradation. Catalyzes the phosphorolysis of single-stranded polyribonucleotides processively in the 3'- to 5'-direction. This chain is Polyribonucleotide nucleotidyltransferase, found in Leptospira borgpetersenii serovar Hardjo-bovis (strain L550).